The primary structure comprises 407 residues: Odorant receptor 67a (407 aa).

Residues 1-40 are Cytoplasmic-facing; sequence MDNVAEMPEEKYVEVDDFLRLAVKFYNTLGIDPYETGRKR. Residues 41 to 61 traverse the membrane as a helical segment; sequence TIWFQIYFALNMFNMVFSFYA. Over 62-79 the chain is Extracellular; it reads EVATLVDRLRDNENFLES. The chain crosses the membrane as a helical span at residues 80–100; sequence CILLSYVSFVVMGLSKIGAVM. Residues 101–144 are Cytoplasmic-facing; it reads KKKPKMTALVRQLETCFPSPSAKVQEEYAVKSWLKRCHIYTKGF. The helical transmembrane segment at 145–165 threads the bilayer; the sequence is GGLFMIMYFAHALIPLFIYFI. Residues 166–208 lie on the Extracellular side of the membrane; the sequence is QRVLLHYPDAKQIMPFYQLEPWEFRDSWLFYPSYFHQSSAGYT. The helical transmembrane segment at 209 to 229 threads the bilayer; sequence ATCGSIAGDLMIFAVVLQVIM. The Cytoplasmic portion of the chain corresponds to 230-278; sequence HYERLAKVLREFKIQAHNAPNGAKEDIRKLQSLVANHIDILRLTDLMNE. The helical transmembrane segment at 279 to 300 threads the bilayer; sequence VFGIPLLLNFIASALLVCLVGV. At 301–314 the chain is on the extracellular side; that stretch reads QLTIALSPEYFCKQ. Residues 315-331 traverse the membrane as a helical segment; it reads MLFLISVLLEVYLLCSF. The Cytoplasmic segment spans residues 332-378; sequence SQRLIDASENVGHAAYDMDWLGSDKRFKKILIFISMRSQKPVCLKAT. Residues 379–401 traverse the membrane as a helical segment; it reads VVLDLSMPTMSIFLGMSYKFFCA. Over 402–407 the chain is Extracellular; it reads VRTMYQ.

It belongs to the insect chemoreceptor superfamily. Heteromeric odorant receptor channel (TC 1.A.69) family. Or49a subfamily. In terms of assembly, interacts with Orco. Complexes exist early in the endomembrane system in olfactory sensory neurons (OSNs), coupling these complexes to the conserved ciliary trafficking pathway. As to expression, expressed in olfactory sensory neurons in the antenna.

It is found in the cell membrane. In terms of biological role, odorant receptor which mediates acceptance or avoidance behavior, depending on its substrates. The odorant receptor repertoire encodes a large collection of odor stimuli that vary widely in identity, intensity, and duration. Forms a complex with Orco to form odorant-sensing units, providing sensitive and prolonged odorant signaling and calcium permeability. Involved in the behavioral responses to benzaldehyde and acetophenone. This is Odorant receptor 67a (Or67a) from Drosophila melanogaster (Fruit fly).